Here is a 212-residue protein sequence, read N- to C-terminus: Stromal cell-derived factor 2-like protein (212 aa).

The signal sequence occupies residues 1–19 (MKSLFLILILCITIPLIFA). Residue Asn20 is glycosylated (N-linked (GlcNAc...) asparagine). 3 consecutive MIR domains span residues 29–86 (ITKV…IKGP), 94–149 (GTVV…VETE), and 151–206 (GKEW…TEEG).

Its subcellular location is the secreted. The sequence is that of Stromal cell-derived factor 2-like protein from Dictyostelium discoideum (Social amoeba).